The chain runs to 93 residues: SH3 domain-binding glutamic acid-rich-like protein 3 (93 aa).

Residue Ser2 is modified to N-acetylserine. In terms of domain architecture, Glutaredoxin spans 2-93 (SGLRVYSTSV…NTLQEFLKLA (92 aa)). An O-linked (GalNAc...) threonine glycan is attached at Thr9.

Belongs to the SH3BGR family. As to quaternary structure, homodimer. Interacts with MYO1C (via its IQ motifs); the interaction is dependent on calcium and takes place at membrane ruffles. Post-translationally, may be glycosylated.

It localises to the cytoplasm. The protein resides in the cytosol. Its subcellular location is the cell projection. The protein localises to the ruffle membrane. It is found in the nucleus. Its function is as follows. Could act as a modulator of glutaredoxin biological activity. May play a role in cytoskeleton organization. This is SH3 domain-binding glutamic acid-rich-like protein 3 (SH3BGRL3) from Bos taurus (Bovine).